A 593-amino-acid chain; its full sequence is Tyrosine-protein phosphatase non-receptor type 11 (593 aa).

Thr-2 is subject to N-acetylthreonine. SH2 domains lie at 6–102 and 112–216; these read WFHP…KYPL and WFHG…KQPL. Phosphotyrosine occurs at positions 62 and 66. The region spanning 247-517 is the Tyrosine-protein phosphatase domain; sequence FWEEFETLQQ…EAQYRFIYMA (271 aa). Substrate-binding positions include Asp-425, 459-465, and Gln-506; that span reads CSAGIGR. The active-site Phosphocysteine intermediate is the Cys-459. Phosphotyrosine; by PDGFR is present on residues Tyr-542 and Tyr-580.

The protein belongs to the protein-tyrosine phosphatase family. Non-receptor class 2 subfamily. Interacts with phosphorylated SIT1, LIME1, BCAR3 and MZPL1. Interacts with FCRL4, FCRL6, ANKHD1, SHB, INPP5D/SHIP1 and CD84. Interacts with MILR1 (tyrosine-phosphorylated). Interacts with FLT1 (tyrosine-phosphorylated), FLT3 (tyrosine-phosphorylated), FLT4 (tyrosine-phosphorylated), KIT and GRB2. Interacts with PTPNS1. Interacts with KIR2DL1; the interaction is enhanced by ARRB2. Interacts (via SH2 domain) with TEK/TIE2 (tyrosine phosphorylated). Interacts with GAB2. Interacts with TERT; the interaction retains TERT in the nucleus. Interacts with PECAM1 and FER. Interacts with EPHA2 (activated); participates in PTK2/FAK1 dephosphorylation in EPHA2 downstream signaling. Interacts with PDGFRA (tyrosine phosphorylated). Interacts with PDGFRB (tyrosine phosphorylated); this interaction increases the PTPN11 phosphatase activity. Interacts with ROS1; this mediates PTPN11 phosphorylation. Interacts with CEACAM1 (via cytoplasmic domain); this interaction depends on the monomer/dimer equilibrium and is phosphorylation-dependent. Interacts with MPIG6B (via ITIM motif). Interacts with SIGLEC10. Interacts with CLEC12B (via ITIM motif); this interaction triggers dephosphorylation and activation of PTPN11. Interacts (via SH2 domains) with NEDD9/CAS-L; the interaction is enhanced when NEDD9/CAS-L is tyrosine phosphorylated. In terms of processing, phosphorylated on Tyr-542 and Tyr-580 upon receptor protein tyrosine kinase activation; which creates a binding site for GRB2 and other SH2-containing proteins. Phosphorylated upon activation of the receptor-type kinase FLT3. Phosphorylated upon activation of the receptor-type kinase PDGFRA. Phosphorylated by activated PDGFRB. In terms of tissue distribution, expressed in brain, muscle and lung.

The protein localises to the cytoplasm. It carries out the reaction O-phospho-L-tyrosyl-[protein] + H2O = L-tyrosyl-[protein] + phosphate. Inhibited by orthovanadate, molybdate and spermidine. Its function is as follows. Acts downstream of various receptor and cytoplasmic protein tyrosine kinases to participate in the signal transduction from the cell surface to the nucleus. Positively regulates MAPK signal transduction pathway. Dephosphorylates GAB1, ARHGAP35 and EGFR. Dephosphorylates ROCK2 at 'Tyr-722' resulting in stimulation of its RhoA binding activity. Dephosphorylates CDC73. Dephosphorylates SOX9 on tyrosine residues, leading to inactivate SOX9 and promote ossification. Dephosphorylates tyrosine-phosphorylated NEDD9/CAS-L. In Rattus norvegicus (Rat), this protein is Tyrosine-protein phosphatase non-receptor type 11 (Ptpn11).